Consider the following 101-residue polypeptide: Small ribosomal subunit protein uS14 (101 aa).

The protein belongs to the universal ribosomal protein uS14 family. In terms of assembly, part of the 30S ribosomal subunit. Contacts proteins S3 and S10.

Its function is as follows. Binds 16S rRNA, required for the assembly of 30S particles and may also be responsible for determining the conformation of the 16S rRNA at the A site. This is Small ribosomal subunit protein uS14 from Colwellia psychrerythraea (strain 34H / ATCC BAA-681) (Vibrio psychroerythus).